The primary structure comprises 217 residues: Proteasome subunit beta type-9 (217 aa).

Residues 1–18 (MLDESLEPGWLSEEVKTG) constitute a propeptide, removed in mature form. Residue T19 is the Nucleophile of the active site.

It belongs to the peptidase T1B family. As to quaternary structure, the 26S proteasome consists of a 20S proteasome core and two 19S regulatory subunits. The 20S proteasome core is composed of 28 subunits that are arranged in four stacked rings, resulting in a barrel-shaped structure. The two end rings are each formed by seven alpha subunits, and the two central rings are each formed by seven beta subunits. The catalytic chamber with the active sites is on the inside of the barrel. Component of the immunoproteasome, where it displaces the equivalent housekeeping subunit PSMB6. In terms of processing, autocleaved. The resulting N-terminal Thr residue of the mature subunit is responsible for the nucleophile proteolytic activity.

The protein resides in the cytoplasm. It is found in the nucleus. It catalyses the reaction Cleavage of peptide bonds with very broad specificity.. In terms of biological role, the proteasome is a multicatalytic proteinase complex which is characterized by its ability to cleave peptides with Arg, Phe, Tyr, Leu, and Glu adjacent to the leaving group at neutral or slightly basic pH. The proteasome has an ATP-dependent proteolytic activity. This subunit is involved in antigen processing to generate class I binding peptides. The sequence is that of Proteasome subunit beta type-9 (psmb9) from Oncorhynchus mykiss (Rainbow trout).